The chain runs to 128 residues: Aspartate 1-decarboxylase (128 aa).

S25 functions as the Schiff-base intermediate with substrate; via pyruvic acid in the catalytic mechanism. S25 is modified (pyruvic acid (Ser)). T57 is a binding site for substrate. Y58 functions as the Proton donor in the catalytic mechanism. Substrate is bound at residue 73-75 (GAA).

The protein belongs to the PanD family. As to quaternary structure, heterooctamer of four alpha and four beta subunits. Requires pyruvate as cofactor. Is synthesized initially as an inactive proenzyme, which is activated by self-cleavage at a specific serine bond to produce a beta-subunit with a hydroxyl group at its C-terminus and an alpha-subunit with a pyruvoyl group at its N-terminus.

The protein resides in the cytoplasm. It carries out the reaction L-aspartate + H(+) = beta-alanine + CO2. It participates in cofactor biosynthesis; (R)-pantothenate biosynthesis; beta-alanine from L-aspartate: step 1/1. Its function is as follows. Catalyzes the pyruvoyl-dependent decarboxylation of aspartate to produce beta-alanine. This chain is Aspartate 1-decarboxylase, found in Caldicellulosiruptor bescii (strain ATCC BAA-1888 / DSM 6725 / KCTC 15123 / Z-1320) (Anaerocellum thermophilum).